Consider the following 302-residue polypeptide: Dioxygenase ALT11 (302 aa).

The tract at residues 1 to 22 (MSSPELPSQMGVPNGHTKLQEV) is disordered. Residues His-147, Asp-149, and His-223 each coordinate Fe cation.

This sequence belongs to the PhyH family. In terms of assembly, homodimer. Fe cation serves as cofactor.

It functions in the pathway mycotoxin biosynthesis. Dioxygenase; part of the gene cluster that mediates the biosynthesis of the host-selective toxins (HSTs) AAL-toxins, sphinganine-analog mycotoxins responsible for Alternaria stem canker on tomato by the tomato pathotype. The biosynthesis starts with the polyketide synthase ALT1-catalyzed C-16 carbon chain assembly from one starter acetyl-CoA unit with malonyl-CoA extender units. ALT1 also selectively transfers methyl groups at the first and the third cycle of chain elongation for AAL toxin. The C-16 polyketide chain is released from the enzyme by a nucleophilic attack of a carbanion, which is derived from R-carbon of glycin by decarboxylation, on the carbonyl carbon of polyketide acyl chain. This step is probably catalyzed by a pyridoxal 5'-phosphate-dependent aminoacyl transferase ALT4. The respective functions of the other enzymes encoded by the cluster have still to be elucidated. The sphingosine N-acyltransferase-like protein ALT7 seems not to act as a resistance/self-tolerance factor against the toxin in the toxin biosynthetic gene cluster, contrary to what is expected. The chain is Dioxygenase ALT11 from Alternaria alternata (Alternaria rot fungus).